The chain runs to 267 residues: Hydrolase FUB4 (267 aa).

Active-site charge relay system residues include Ser93, Asp183, and His243.

The protein belongs to the AB hydrolase 3 family.

The protein operates within mycotoxin biosynthesis. Functionally, hydrolase; part of the gene cluster that mediates the biosynthesis of fusaric acid, a mycotoxin with low to moderate toxicity to animals and humans, but with high phytotoxic properties. L-aspartate is suggested as fusaric acid amino acid precursor that is activated and further processed to O-acetyl-L-homoserine by cluster enzymes aspartate kinase FUB3 and homoserine O-acetyltransferase FUB5, as well as enzymes of the primary metabolism. The polyketide synthase (PKS) FUB1 generates the triketide trans-2-hexenal which is presumptively released by the hydrolase FUB4 and linked to the NRPS-bound amino acid precursor by NAD(P)-dependent dehydrogenase FUB6. FUB1, FUB4, and the non-canonical NRPS Fub8 may form an enzyme complex. Further processing of the NRPS-bound intermediate might be carried out by FUB6 and the sulfhydrylase FUB7, enabling a spontaneous electrocyclization to close the carbon backbone of fusaric acid. Dihydrofusaric acid is likely to be released via reduction by the thioester reductase (TR) domain of FUB8 whereupon the final oxidation to fusaric acid may (also) be performed by the FMN-dependent dehydrogenase FUB9. This chain is Hydrolase FUB4, found in Gibberella moniliformis (strain M3125 / FGSC 7600) (Maize ear and stalk rot fungus).